Consider the following 364-residue polypeptide: Chorismate synthase (364 aa).

The disordered stretch occupies residues 41–60 (MQHDLDRRRPGTSRYTTARR). Positions 48 and 54 each coordinate NADP(+). FMN contacts are provided by residues 125–127 (RSS), 238–239 (NA), glycine 278, 293–297 (KPTSS), and arginine 319.

The protein belongs to the chorismate synthase family. In terms of assembly, homotetramer. FMNH2 serves as cofactor.

It catalyses the reaction 5-O-(1-carboxyvinyl)-3-phosphoshikimate = chorismate + phosphate. It functions in the pathway metabolic intermediate biosynthesis; chorismate biosynthesis; chorismate from D-erythrose 4-phosphate and phosphoenolpyruvate: step 7/7. In terms of biological role, catalyzes the anti-1,4-elimination of the C-3 phosphate and the C-6 proR hydrogen from 5-enolpyruvylshikimate-3-phosphate (EPSP) to yield chorismate, which is the branch point compound that serves as the starting substrate for the three terminal pathways of aromatic amino acid biosynthesis. This reaction introduces a second double bond into the aromatic ring system. This chain is Chorismate synthase, found in Shewanella baltica (strain OS223).